Reading from the N-terminus, the 442-residue chain is tRNA modification GTPase MnmE (442 aa).

3 residues coordinate (6S)-5-formyl-5,6,7,8-tetrahydrofolate: arginine 27, glutamate 84, and lysine 124. The TrmE-type G domain occupies 221–366 (GLHVVIVGAP…LLDALQAFAE (146 aa)). GTP contacts are provided by residues 231 to 236 (NAGKSS), 250 to 256 (SEEAGTT), and 275 to 278 (DTAG). The Mg(2+) site is built by serine 235 and threonine 256. Lysine 442 provides a ligand contact to (6S)-5-formyl-5,6,7,8-tetrahydrofolate.

The protein belongs to the TRAFAC class TrmE-Era-EngA-EngB-Septin-like GTPase superfamily. TrmE GTPase family. As to quaternary structure, homodimer. Heterotetramer of two MnmE and two MnmG subunits. The cofactor is K(+).

It is found in the cytoplasm. Functionally, exhibits a very high intrinsic GTPase hydrolysis rate. Involved in the addition of a carboxymethylaminomethyl (cmnm) group at the wobble position (U34) of certain tRNAs, forming tRNA-cmnm(5)s(2)U34. This Brucella suis (strain ATCC 23445 / NCTC 10510) protein is tRNA modification GTPase MnmE.